We begin with the raw amino-acid sequence, 236 residues long: Class B acid phosphatase (236 aa).

An N-terminal signal peptide occupies residues 1 to 23 (MRKLTLTLSALALALSLNSVADA). D68 acts as the Nucleophile in catalysis. 2 residues coordinate Mg(2+): D68 and D70. The active-site Proton donor is the D70. Residues 136–137 (TG) and K176 each bind substrate. D191 contacts Mg(2+).

The protein belongs to the class B bacterial acid phosphatase family. As to quaternary structure, homotetramer. It depends on Mg(2+) as a cofactor.

The protein resides in the periplasm. The enzyme catalyses a phosphate monoester + H2O = an alcohol + phosphate. With respect to regulation, activated by ethanol. Also activated by Co(2+), Zn(2+) and glycerol. Inhibited by EDTA, inorganic phosphate, nucleosides and Ca(2+). Unaffected by fluoride and tartrate. In terms of biological role, dephosphorylates several organic phosphate monoesters including 5'-AMP, 3'-AMP, pNPP, PDP, 5'-UMP, 3'-UMP, G2P, glucose 6-P and ribose 5-P. No activity toward organic phosphate diesters. Also has a phosphotransferase activity catalyzing the transfer of low-energy phosphate groups from organic phosphate monoesters to free hydroxyl groups of various organic compounds. The polypeptide is Class B acid phosphatase (aphA) (Morganella morganii (Proteus morganii)).